A 167-amino-acid polypeptide reads, in one-letter code: Periplasmic nitrate reductase, electron transfer subunit (167 aa).

An N-terminal signal peptide occupies residues 1–34; it reads MRRAHRAGERVMMKRFGIALLAVAIAAGASSLTA. Positions 40 to 65 are disordered; the sequence is GLHGPAPLNDEGPAPPMLPNRNTSER. Residues H79, C93, C96, H97, H114, C133, C136, and H137 each coordinate heme c.

It belongs to the NapB family. As to quaternary structure, component of the periplasmic nitrate reductase NapAB complex composed of NapA and NapB. Binds 2 heme C groups per subunit.

It localises to the periplasm. Its function is as follows. Electron transfer subunit of the periplasmic nitrate reductase complex NapAB. Receives electrons from the membrane-anchored tetraheme c-type NapC protein and transfers these to NapA subunit, thus allowing electron flow between membrane and periplasm. Essential for periplasmic nitrate reduction with nitrate as the terminal electron acceptor. This chain is Periplasmic nitrate reductase, electron transfer subunit, found in Bradyrhizobium japonicum.